Consider the following 129-residue polypeptide: Follitropin subunit beta (129 aa).

A signal peptide spans 1-20 (MKTLQFFFLFCCWKAICCNS). Disulfide bonds link Cys21-Cys69, Cys35-Cys84, Cys38-Cys122, Cys46-Cys100, Cys50-Cys102, and Cys105-Cys112. N-linked (GlcNAc...) asparagine glycosylation is found at Asn25 and Asn42.

Belongs to the glycoprotein hormones subunit beta family. In terms of assembly, heterodimer. The active follitropin is a heterodimer composed of an alpha chain/CGA shared with other hormones and a unique beta chain/FSHB shown here.

It is found in the secreted. Functionally, together with the alpha chain CGA constitutes follitropin, the follicle-stimulating hormone, and provides its biological specificity to the hormone heterodimer. Binds FSHR, a G protein-coupled receptor, on target cells to activate downstream signaling pathways. Follitropin is involved in follicle development and spermatogenesis in reproductive organs. In Pan troglodytes (Chimpanzee), this protein is Follitropin subunit beta (FSHB).